A 215-amino-acid chain; its full sequence is Adenylate kinase (215 aa).

Position 10–15 (10–15 (GAGKGT)) interacts with ATP. The interval 30 to 59 (STGDILRENVKNQTELGKKAKEYMDKGLLV) is NMP. AMP is bound by residues threonine 31, arginine 36, 57–59 (LLV), 85–88 (GFPR), and glutamine 92. The LID stretch occupies residues 126 to 163 (GRRICKSCGASFHVVYRPPKKEGICDICGGQLYQREDD). An ATP-binding site is contributed by arginine 127. Zn(2+) contacts are provided by cysteine 130 and cysteine 133. 136-137 (SF) is an ATP binding site. Residues cysteine 150 and cysteine 153 each contribute to the Zn(2+) site. Positions 160 and 171 each coordinate AMP. Residue glutamate 199 coordinates ATP.

It belongs to the adenylate kinase family. In terms of assembly, monomer.

The protein localises to the cytoplasm. It catalyses the reaction AMP + ATP = 2 ADP. It participates in purine metabolism; AMP biosynthesis via salvage pathway; AMP from ADP: step 1/1. Catalyzes the reversible transfer of the terminal phosphate group between ATP and AMP. Plays an important role in cellular energy homeostasis and in adenine nucleotide metabolism. This Caldicellulosiruptor saccharolyticus (strain ATCC 43494 / DSM 8903 / Tp8T 6331) protein is Adenylate kinase.